The sequence spans 375 residues: tRNA-specific 2-thiouridylase MnmA 3 (375 aa).

Residues glycine 11–serine 18 and methionine 37 contribute to the ATP site. Catalysis depends on cysteine 104, which acts as the Nucleophile. Cysteines 104 and 201 form a disulfide. Glycine 128 serves as a coordination point for ATP. The segment at lysine 150 to glutamine 152 is interaction with tRNA. Cysteine 201 functions as the Cysteine persulfide intermediate in the catalytic mechanism. Residues arginine 309–tyrosine 310 form an interaction with tRNA region.

It belongs to the MnmA/TRMU family.

It is found in the cytoplasm. It catalyses the reaction S-sulfanyl-L-cysteinyl-[protein] + uridine(34) in tRNA + AH2 + ATP = 2-thiouridine(34) in tRNA + L-cysteinyl-[protein] + A + AMP + diphosphate + H(+). Catalyzes the 2-thiolation of uridine at the wobble position (U34) of tRNA, leading to the formation of s(2)U34. The protein is tRNA-specific 2-thiouridylase MnmA 3 of Phocaeicola vulgatus (strain ATCC 8482 / DSM 1447 / JCM 5826 / CCUG 4940 / NBRC 14291 / NCTC 11154) (Bacteroides vulgatus).